A 460-amino-acid chain; its full sequence is Bifunctional protein GlmU (460 aa).

Positions 1-229 (MTNYAIILAA…FNESLGVNDR (229 aa)) are pyrophosphorylase. UDP-N-acetyl-alpha-D-glucosamine contacts are provided by residues 8-11 (LAAG), Lys-22, Gln-72, and 77-78 (GT). Asp-102 serves as a coordination point for Mg(2+). The UDP-N-acetyl-alpha-D-glucosamine site is built by Gly-139, Glu-154, Asn-169, and Asn-227. A Mg(2+)-binding site is contributed by Asn-227. The segment at 230–250 (VALATAETVMRQRITQKHMVN) is linker. The interval 251–460 (GVTFQNPETV…RLAHHPSRSK (210 aa)) is N-acetyltransferase. 2 residues coordinate UDP-N-acetyl-alpha-D-glucosamine: Arg-332 and Lys-350. Catalysis depends on His-362, which acts as the Proton acceptor. Tyr-365 and Asn-376 together coordinate UDP-N-acetyl-alpha-D-glucosamine. Acetyl-CoA contacts are provided by residues Ala-379, 385–386 (NY), Ser-404, Ala-422, and Arg-439.

In the N-terminal section; belongs to the N-acetylglucosamine-1-phosphate uridyltransferase family. It in the C-terminal section; belongs to the transferase hexapeptide repeat family. As to quaternary structure, homotrimer. Mg(2+) serves as cofactor.

The protein resides in the cytoplasm. It catalyses the reaction alpha-D-glucosamine 1-phosphate + acetyl-CoA = N-acetyl-alpha-D-glucosamine 1-phosphate + CoA + H(+). The catalysed reaction is N-acetyl-alpha-D-glucosamine 1-phosphate + UTP + H(+) = UDP-N-acetyl-alpha-D-glucosamine + diphosphate. Its pathway is nucleotide-sugar biosynthesis; UDP-N-acetyl-alpha-D-glucosamine biosynthesis; N-acetyl-alpha-D-glucosamine 1-phosphate from alpha-D-glucosamine 6-phosphate (route II): step 2/2. The protein operates within nucleotide-sugar biosynthesis; UDP-N-acetyl-alpha-D-glucosamine biosynthesis; UDP-N-acetyl-alpha-D-glucosamine from N-acetyl-alpha-D-glucosamine 1-phosphate: step 1/1. It functions in the pathway bacterial outer membrane biogenesis; LPS lipid A biosynthesis. Functionally, catalyzes the last two sequential reactions in the de novo biosynthetic pathway for UDP-N-acetylglucosamine (UDP-GlcNAc). The C-terminal domain catalyzes the transfer of acetyl group from acetyl coenzyme A to glucosamine-1-phosphate (GlcN-1-P) to produce N-acetylglucosamine-1-phosphate (GlcNAc-1-P), which is converted into UDP-GlcNAc by the transfer of uridine 5-monophosphate (from uridine 5-triphosphate), a reaction catalyzed by the N-terminal domain. The chain is Bifunctional protein GlmU from Streptococcus pyogenes serotype M18 (strain MGAS8232).